We begin with the raw amino-acid sequence, 498 residues long: ATP synthase subunit beta, chloroplastic (498 aa).

172 to 179 (GGAGVGKT) contacts ATP.

The protein belongs to the ATPase alpha/beta chains family. As to quaternary structure, F-type ATPases have 2 components, CF(1) - the catalytic core - and CF(0) - the membrane proton channel. CF(1) has five subunits: alpha(3), beta(3), gamma(1), delta(1), epsilon(1). CF(0) has four main subunits: a(1), b(1), b'(1) and c(9-12).

The protein localises to the plastid. It localises to the chloroplast thylakoid membrane. It carries out the reaction ATP + H2O + 4 H(+)(in) = ADP + phosphate + 5 H(+)(out). In terms of biological role, produces ATP from ADP in the presence of a proton gradient across the membrane. The catalytic sites are hosted primarily by the beta subunits. In Agapanthus africanus (Lily of the Nile), this protein is ATP synthase subunit beta, chloroplastic.